Here is a 240-residue protein sequence, read N- to C-terminus: UDP-2,3-diacylglucosamine hydrolase (240 aa).

Residues D8, H10, D41, N78, and H113 each contribute to the Mn(2+) site. 78-79 contacts substrate; the sequence is NR. Substrate contacts are provided by D121, S159, N163, K166, and H194. Residues H194 and H196 each coordinate Mn(2+).

It belongs to the LpxH family. The cofactor is Mn(2+).

The protein resides in the cell inner membrane. It carries out the reaction UDP-2-N,3-O-bis[(3R)-3-hydroxytetradecanoyl]-alpha-D-glucosamine + H2O = 2-N,3-O-bis[(3R)-3-hydroxytetradecanoyl]-alpha-D-glucosaminyl 1-phosphate + UMP + 2 H(+). Its pathway is glycolipid biosynthesis; lipid IV(A) biosynthesis; lipid IV(A) from (3R)-3-hydroxytetradecanoyl-[acyl-carrier-protein] and UDP-N-acetyl-alpha-D-glucosamine: step 4/6. Its function is as follows. Hydrolyzes the pyrophosphate bond of UDP-2,3-diacylglucosamine to yield 2,3-diacylglucosamine 1-phosphate (lipid X) and UMP by catalyzing the attack of water at the alpha-P atom. Involved in the biosynthesis of lipid A, a phosphorylated glycolipid that anchors the lipopolysaccharide to the outer membrane of the cell. This Shewanella baltica (strain OS195) protein is UDP-2,3-diacylglucosamine hydrolase.